A 406-amino-acid chain; its full sequence is tRNA-specific 2-thiouridylase MnmA (406 aa).

Residues 42–49 (GLSGGVDS) and Leu68 contribute to the ATP site. The active-site Nucleophile is the Cys129. A disulfide bridge links Cys129 with Cys237. ATP is bound at residue Gly154. The interval 187–189 (KDQ) is interaction with tRNA. Cys237 (cysteine persulfide intermediate) is an active-site residue. The segment at 342-343 (RY) is interaction with tRNA.

Belongs to the MnmA/TRMU family.

It localises to the cytoplasm. The enzyme catalyses S-sulfanyl-L-cysteinyl-[protein] + uridine(34) in tRNA + AH2 + ATP = 2-thiouridine(34) in tRNA + L-cysteinyl-[protein] + A + AMP + diphosphate + H(+). Its function is as follows. Catalyzes the 2-thiolation of uridine at the wobble position (U34) of tRNA, leading to the formation of s(2)U34. The chain is tRNA-specific 2-thiouridylase MnmA from Prochlorococcus marinus (strain MIT 9211).